We begin with the raw amino-acid sequence, 537 residues long: Cryptic loci regulator 2 (537 aa).

The disordered stretch occupies residues 96–116; sequence VSARHVRPNPKSSKDTLEKQP. Basic and acidic residues predominate over residues 107–116; the sequence is SSKDTLEKQP.

In terms of assembly, interacts with clr3.

The protein resides in the nucleus. Its subcellular location is the chromosome. The protein localises to the centromere. It is found in the telomere. Required for deacetylation in the mating-type region and the centromere. Acts upstream of the histone deacetylases to promote transcriptional silencing. Required for proper positioning of nucleosomes at heterochromatic loci and for transcriptional gene silencing (TGS) function of the Snf2/Hdac-containing repressor complex (SHREC). The protein is Cryptic loci regulator 2 (clr2) of Schizosaccharomyces pombe (strain 972 / ATCC 24843) (Fission yeast).